We begin with the raw amino-acid sequence, 824 residues long: Leucine--tRNA ligase (824 aa).

Residues 42–52 carry the 'HIGH' region motif; sequence PYPSGRIHMGH. The 'KMSKS' region signature appears at 581 to 585; sequence KMSKS. Residue Lys584 participates in ATP binding.

The protein belongs to the class-I aminoacyl-tRNA synthetase family.

The protein resides in the cytoplasm. The catalysed reaction is tRNA(Leu) + L-leucine + ATP = L-leucyl-tRNA(Leu) + AMP + diphosphate. The protein is Leucine--tRNA ligase of Geobacter metallireducens (strain ATCC 53774 / DSM 7210 / GS-15).